Here is a 313-residue protein sequence, read N- to C-terminus: Bifunctional pinoresinol-lariciresinol reductase 1 (313 aa).

Residues 11 to 17 (GGTGYIG), Arg36, and Lys45 contribute to the NADP(+) site. Residue Lys138 is the Proton acceptor of the active site. Arg142 is an NADP(+) binding site. His271 is a binding site for substrate.

Belongs to the NmrA-type oxidoreductase family. Isoflavone reductase subfamily. In terms of assembly, dimer.

The catalysed reaction is (+)-lariciresinol + NADP(+) = (+)-pinoresinol + NADPH + H(+). It catalyses the reaction (-)-lariciresinol + NADP(+) = (-)-pinoresinol + NADPH + H(+). It carries out the reaction (+)-secoisolariciresinol + NADP(+) = (-)-lariciresinol + NADPH + H(+). Functionally, reductase involved in lignan biosynthesis. Catalyzes the enantioselective sequential conversion of (-)-pinoresinol into (-)-lariciresinol and of (-)-lariciresinol into (+)-secoisolariciresinol. Can also convert with a lower efficiency (+)-pinoresinol into (+)-lariciresinol, but not (+)-lariciresinol into (-)-secoisolariciresinol. Abstracts the 4R-hydride from the NADPH cofactor during catalysis. The polypeptide is Bifunctional pinoresinol-lariciresinol reductase 1 (PLR_Tp1) (Thuja plicata (Western red-cedar)).